Reading from the N-terminus, the 327-residue chain is Serine/threonine-protein phosphatase 4 regulatory subunit ppfr-4 (327 aa).

The stretch at Lys-141–Leu-185 forms a coiled coil. The segment at Lys-271–Gly-327 is disordered. Positions Asn-275 to Ala-284 are enriched in polar residues. Acidic residues predominate over residues Gln-291–Glu-301. Positions Ala-302–Arg-318 are enriched in basic and acidic residues.

In terms of assembly, serine/threonine-protein phosphatase 4 (PP4) occurs in different assemblies of the catalytic and one or more regulatory subunits. The catalytic subunit is likely to be pph-4.1.

Probable regulatory subunit of serine/threonine-protein phosphatase PP4 which may play a role in meiosis and embryonic mitosis. Probably in association with catalytic subunit pph-4.1, regulates microtubule severing during oocyte meiosis II by dephosphorylating and likely activating mei-1, a component of the katanin microtubule severing complex. This is Serine/threonine-protein phosphatase 4 regulatory subunit ppfr-4 from Caenorhabditis elegans.